The primary structure comprises 218 residues: Thiopurine S-methyltransferase (218 aa).

Residues Trp10, Leu45, Glu66, and Arg123 each contribute to the S-adenosyl-L-methionine site.

This sequence belongs to the class I-like SAM-binding methyltransferase superfamily. TPMT family.

Its subcellular location is the cytoplasm. The enzyme catalyses S-adenosyl-L-methionine + a thiopurine = S-adenosyl-L-homocysteine + a thiopurine S-methylether.. The protein is Thiopurine S-methyltransferase of Pseudomonas fluorescens (strain SBW25).